The chain runs to 294 residues: 4-hydroxy-tetrahydrodipicolinate synthase (294 aa).

Threonine 45 lines the pyruvate pocket. Catalysis depends on tyrosine 133, which acts as the Proton donor/acceptor. Lysine 161 functions as the Schiff-base intermediate with substrate in the catalytic mechanism. Residue isoleucine 203 coordinates pyruvate.

This sequence belongs to the DapA family. As to quaternary structure, homotetramer; dimer of dimers.

It localises to the cytoplasm. It catalyses the reaction L-aspartate 4-semialdehyde + pyruvate = (2S,4S)-4-hydroxy-2,3,4,5-tetrahydrodipicolinate + H2O + H(+). It participates in amino-acid biosynthesis; L-lysine biosynthesis via DAP pathway; (S)-tetrahydrodipicolinate from L-aspartate: step 3/4. Its function is as follows. Catalyzes the condensation of (S)-aspartate-beta-semialdehyde [(S)-ASA] and pyruvate to 4-hydroxy-tetrahydrodipicolinate (HTPA). This is 4-hydroxy-tetrahydrodipicolinate synthase from Alcanivorax borkumensis (strain ATCC 700651 / DSM 11573 / NCIMB 13689 / SK2).